Reading from the N-terminus, the 311-residue chain is Malate dehydrogenase (311 aa).

Residues 7-13 (GAAGGIG) and Asp34 contribute to the NAD(+) site. Substrate-binding residues include Arg81 and Arg87. NAD(+) contacts are provided by residues Asn94 and 117-119 (ITN). Residues Asn119 and Arg153 each contribute to the substrate site. The active-site Proton acceptor is His177. Met227 is a binding site for NAD(+).

This sequence belongs to the LDH/MDH superfamily. MDH type 1 family. In terms of assembly, homodimer.

It catalyses the reaction (S)-malate + NAD(+) = oxaloacetate + NADH + H(+). Catalyzes the reversible oxidation of malate to oxaloacetate. This Aeromonas hydrophila subsp. hydrophila (strain ATCC 7966 / DSM 30187 / BCRC 13018 / CCUG 14551 / JCM 1027 / KCTC 2358 / NCIMB 9240 / NCTC 8049) protein is Malate dehydrogenase.